Here is a 378-residue protein sequence, read N- to C-terminus: MAKKVKKNEEITKKFGDERRKALDDALKNIEKDFGKGAVMRLGERAEQKVQVMSSGSLALDIALGAGGYPKGRIIEIYGPESSGKTTVALHAVAQAQKEGGIAAFIDAEHALDPAYAAALGVNIDELLLSQPDSGEQGLEIAGKLIDSGAVDLVVVDSVAALVPRAEIDGDIGDNHVGLQARMMSQAMRKLSASINKTKTIAIFINQLREKVGVMFGNPETTPGGRALKFYASVRLDVRGTTQIKGTGDQKDSSIGKETKIKVVKNKVAPPFKVAEVEIMYGEGISRTGELIKIASDLDIIQKAGAWFSYNGEKIGQGSENAKRYLADHPELFDEIDHKVRVKFGLLEDTEESAAVDPAAAKADELVLELDDAIEIED.

79-86 (GPESSGKT) serves as a coordination point for ATP.

Belongs to the RecA family.

Its subcellular location is the cytoplasm. Can catalyze the hydrolysis of ATP in the presence of single-stranded DNA, the ATP-dependent uptake of single-stranded DNA by duplex DNA, and the ATP-dependent hybridization of homologous single-stranded DNAs. It interacts with LexA causing its activation and leading to its autocatalytic cleavage. In Streptococcus equi subsp. zooepidemicus (strain MGCS10565), this protein is Protein RecA.